The sequence spans 428 residues: MNTTRSQAIFSAAQRLMPGGVSSPVRAFRSVGGQPIVFDRVKGAYAWDVDGNRFIDYIGSWGPAICGHAHPEVIVALQDALEKGTSFGAPCELENQLAEMVIDAVPSVEMVRFVNSGTEACMSVLRLMRAFTGRDKLIKFEGCYHGHADMFLVKAGSGVATLGLPDSPGVPRSTTSNTLTAPYNDLEAVKELFAENPDAISGVILEPVVGNAGFITPEPGFLEGLRELTREHGALLVFDEVMSGFRISYGGAQARFGVTPDLTTMGKVIGGGLPVGAYGGRAEIMEMVAPAGPMYQAGTLSGNPLAMTAGIKTLELLKQEGTYERLESTTERLIKGILEAAKAAEVPITGNSIGAMFGFFLCEGPVRNFEDAKATDTELFGKLHRAMLERGIYLAPSAFEAGFTSLAHSEADIETTLKAFRESFAAVA.

K267 is subject to N6-(pyridoxal phosphate)lysine.

This sequence belongs to the class-III pyridoxal-phosphate-dependent aminotransferase family. HemL subfamily. Homodimer. Pyridoxal 5'-phosphate is required as a cofactor.

Its subcellular location is the cytoplasm. It catalyses the reaction (S)-4-amino-5-oxopentanoate = 5-aminolevulinate. It participates in porphyrin-containing compound metabolism; protoporphyrin-IX biosynthesis; 5-aminolevulinate from L-glutamyl-tRNA(Glu): step 2/2. Its pathway is porphyrin-containing compound metabolism; chlorophyll biosynthesis. This is Glutamate-1-semialdehyde 2,1-aminomutase from Prochlorococcus marinus (strain MIT 9313).